We begin with the raw amino-acid sequence, 201 residues long: Protocatechuate 3,4-dioxygenase alpha chain (201 aa).

Arg-134 is a binding site for 3,4-dihydroxybenzoate.

Belongs to the intradiol ring-cleavage dioxygenase family. In terms of assembly, the enzyme is an oligomer of 12 copies of the alpha and beta chains. It depends on Fe(3+) as a cofactor.

The enzyme catalyses 3,4-dihydroxybenzoate + O2 = 3-carboxy-cis,cis-muconate + 2 H(+). The protein operates within aromatic compound metabolism; beta-ketoadipate pathway; 3-carboxy-cis,cis-muconate from 3,4-dihydroxybenzoate: step 1/1. In terms of biological role, plays an essential role in the utilization of numerous aromatic and hydroaromatic compounds via the beta-ketoadipate pathway. The chain is Protocatechuate 3,4-dioxygenase alpha chain (pcaG) from Pseudomonas putida (Arthrobacter siderocapsulatus).